Here is a 578-residue protein sequence, read N- to C-terminus: Arginine--tRNA ligase (578 aa).

Residues 127–137 (PNLAKEMHVGH) carry the 'HIGH' region motif.

This sequence belongs to the class-I aminoacyl-tRNA synthetase family. Monomer.

It localises to the cytoplasm. The catalysed reaction is tRNA(Arg) + L-arginine + ATP = L-arginyl-tRNA(Arg) + AMP + diphosphate. In Pseudomonas fluorescens (strain Pf0-1), this protein is Arginine--tRNA ligase.